The following is an 893-amino-acid chain: Serine/threonine-protein kinase PLK4 (893 aa).

The 254-residue stretch at 12–265 (FRVGNLLGKG…LSSVLDHPFM (254 aa)) folds into the Protein kinase domain. Residues 18 to 26 (LGKGSFAGV) and Lys41 each bind ATP. Residues Lys45 and Lys46 each carry the N6-acetyllysine modification. Catalysis depends on Asp136, which acts as the Proton acceptor. Residues 349–358 (NQEQETSNSG) show a composition bias toward polar residues. The segment at 349–393 (NQEQETSNSGRGRVIQEAEERPHSRYLRRAHSSDRSETSHGQSRV) is disordered. Over residues 362–371 (VIQEAEERPH) the composition is skewed to basic and acidic residues. Phosphoserine occurs at positions 403 and 588. One can recognise a Cryptic POLO box 1 (CPB1) domain in the interval 509–622 (TLRSITSPLT…SRFVQLVRSK (114 aa)). Residues 623–736 (SPKITYFTRY…GRRPSSTSSP (114 aa)) form the Cryptic POLO box 2 (CPB2) domain. Positions 730-749 (PSSTSSPKALTPPPPVDPNY) are disordered. One can recognise a POLO box domain in the interval 809 to 887 (QLLKSVFVKN…LSSILLMFSN (79 aa)).

Belongs to the protein kinase superfamily. Ser/Thr protein kinase family. CDC5/Polo subfamily. Homodimer. Interacts with CEP152 (via N-terminus). Interacts with CEP78; this interaction may be important for proper PLK4 localization to the centriole and PLK4-induced overduplication of centrioles. Interacts with CEP131. Interacts simultaneously with TENT5C and CEP192. Interacts with TENT5C; this interaction leads to the TENT5C recruitment in the centrosome. Interacts with CEP85; this interaction may be important in cell migration and centriole assembly. Post-translationally, ubiquitinated; leading to its degradation by the proteasome. Tyrosine-phosphorylated by TEC. In terms of processing, acetylation by KAT2A and KAT2B impairs kinase activity by shifting the kinase to an inactive conformation.

The protein resides in the cytoplasm. Its subcellular location is the cytoskeleton. It localises to the microtubule organizing center. It is found in the centrosome. The protein localises to the centriole. The protein resides in the nucleus. Its subcellular location is the nucleolus. It localises to the cleavage furrow. It catalyses the reaction L-seryl-[protein] + ATP = O-phospho-L-seryl-[protein] + ADP + H(+). The catalysed reaction is L-threonyl-[protein] + ATP = O-phospho-L-threonyl-[protein] + ADP + H(+). Functionally, serine/threonine-protein kinase that plays a central role in centriole duplication. Able to trigger procentriole formation on the surface of the parental centriole cylinder, leading to the recruitment of centriole biogenesis proteins such as SASS6, CPAP, CCP110, CEP135 and gamma-tubulin. When overexpressed, it is able to induce centrosome amplification through the simultaneous generation of multiple procentrioles adjoining each parental centriole during S phase. Phosphorylates 'Ser-151' of FBXW5 during the G1/S transition, leading to inhibit FBXW5 ability to ubiquitinate SASS6. Its central role in centriole replication suggests a possible role in tumorigenesis, centrosome aberrations being frequently observed in tumors. Also involved in deuterosome-mediated centriole amplification in multiciliated that can generate more than 100 centrioles. Also involved in trophoblast differentiation by phosphorylating HAND1, leading to disrupt the interaction between HAND1 and MDFIC and activate HAND1. Phosphorylates CDC25C and CHEK2. Required for the recruitment of STIL to the centriole and for STIL-mediated centriole amplification. Phosphorylates CEP131 and PCM1 which is essential for proper organization and integrity of centriolar satellites. The chain is Serine/threonine-protein kinase PLK4 from Bos taurus (Bovine).